The primary structure comprises 174 residues: Ribosome maturation factor RimM (174 aa).

The PRC barrel domain maps to 95–174; it reads DDEFYWRDLI…QIQVEWPSDF (80 aa).

This sequence belongs to the RimM family. In terms of assembly, binds ribosomal protein uS19.

It localises to the cytoplasm. An accessory protein needed during the final step in the assembly of 30S ribosomal subunit, possibly for assembly of the head region. Essential for efficient processing of 16S rRNA. May be needed both before and after RbfA during the maturation of 16S rRNA. It has affinity for free ribosomal 30S subunits but not for 70S ribosomes. In Idiomarina loihiensis (strain ATCC BAA-735 / DSM 15497 / L2-TR), this protein is Ribosome maturation factor RimM.